Here is a 428-residue protein sequence, read N- to C-terminus: Adenylosuccinate synthetase (428 aa).

GTP-binding positions include 12–18 and 40–42; these read GDEGKGK and GHT. Catalysis depends on D13, which acts as the Proton acceptor. Mg(2+)-binding residues include D13 and G40. Residues 13–16, 38–41, T128, R142, Q223, T238, and R302 contribute to the IMP site; these read DEGK and NAGH. The active-site Proton donor is the H41. A substrate-binding site is contributed by 298–304; sequence TTTGRPR. GTP contacts are provided by residues R304, 330–332, and 412–414; these read KLD and GVG.

This sequence belongs to the adenylosuccinate synthetase family. Homodimer. The cofactor is Mg(2+).

The protein localises to the cytoplasm. It carries out the reaction IMP + L-aspartate + GTP = N(6)-(1,2-dicarboxyethyl)-AMP + GDP + phosphate + 2 H(+). The protein operates within purine metabolism; AMP biosynthesis via de novo pathway; AMP from IMP: step 1/2. Its function is as follows. Plays an important role in the de novo pathway of purine nucleotide biosynthesis. Catalyzes the first committed step in the biosynthesis of AMP from IMP. This Kineococcus radiotolerans (strain ATCC BAA-149 / DSM 14245 / SRS30216) protein is Adenylosuccinate synthetase.